Here is a 452-residue protein sequence, read N- to C-terminus: AP-4 complex subunit mu-1 (452 aa).

Positions 184–451 constitute an MHD domain; that stretch reads KNEVFLDVVE…LSHSDAYVIR (268 aa).

This sequence belongs to the adaptor complexes medium subunit family. In terms of assembly, adaptor protein complex 4 (AP-4) is a heterotetramer composed of two large adaptins (epsilon-type subunit AP4E1 and beta-type subunit AP4B1), a medium adaptin (mu-type subunit AP4M1) and a small adaptin (sigma-type AP4S1). Interacts with tyrosine-based sorting signals on the cytoplasmic tail of cargo proteins such as APP, ATG9A, LAMP2 and NAGPA. Interacts with the C-terminal domain of GRID2. Interacts with GRIA1 and GRIA2; the interaction is indirect via CACNG3. Interacts with CACNG3; CACNG3 associates GRIA1 and GRIA2 with the adaptor protein complex 4 (AP-4) to target them to the somatodendritic compartment of neurons. Interacts with HOOK1 and HOOK2; the interactions are direct, mediate the interaction between FTS-Hook-FHIP (FHF) complex and AP-4 and the perinuclear distribution of AP-4.

The protein localises to the golgi apparatus. Its subcellular location is the trans-Golgi network membrane. It localises to the early endosome. Component of the adaptor protein complex 4 (AP-4). Adaptor protein complexes are vesicle coat components involved both in vesicle formation and cargo selection. They control the vesicular transport of proteins in different trafficking pathways. AP-4 forms a non clathrin-associated coat on vesicles departing the trans-Golgi network (TGN) and may be involved in the targeting of proteins from the trans-Golgi network (TGN) to the endosomal-lysosomal system. It is also involved in protein sorting to the basolateral membrane in epithelial cells and the proper asymmetric localization of somatodendritic proteins in neurons. Within AP-4, the mu-type subunit AP4M1 is directly involved in the recognition and binding of tyrosine-based sorting signals found in the cytoplasmic part of cargos. The adaptor protein complex 4 (AP-4) may also recognize other types of sorting signal. The protein is AP-4 complex subunit mu-1 of Canis lupus familiaris (Dog).